The primary structure comprises 983 residues: Bifunctional glutamine synthetase adenylyltransferase/adenylyl-removing enzyme (983 aa).

Positions 1-468 are adenylyl removase; that stretch reads MTVENAKALF…KQYAALFAQA (468 aa). An adenylyl transferase region spans residues 473-983; sequence AASGNLVFTG…FDKLVGHGAD (511 aa).

It belongs to the GlnE family. Requires Mg(2+) as cofactor.

It catalyses the reaction [glutamine synthetase]-O(4)-(5'-adenylyl)-L-tyrosine + phosphate = [glutamine synthetase]-L-tyrosine + ADP. The catalysed reaction is [glutamine synthetase]-L-tyrosine + ATP = [glutamine synthetase]-O(4)-(5'-adenylyl)-L-tyrosine + diphosphate. Involved in the regulation of glutamine synthetase GlnA, a key enzyme in the process to assimilate ammonia. When cellular nitrogen levels are high, the C-terminal adenylyl transferase (AT) inactivates GlnA by covalent transfer of an adenylyl group from ATP to specific tyrosine residue of GlnA, thus reducing its activity. Conversely, when nitrogen levels are low, the N-terminal adenylyl removase (AR) activates GlnA by removing the adenylyl group by phosphorolysis, increasing its activity. The regulatory region of GlnE binds the signal transduction protein PII (GlnB) which indicates the nitrogen status of the cell. The polypeptide is Bifunctional glutamine synthetase adenylyltransferase/adenylyl-removing enzyme (Brucella suis biovar 1 (strain 1330)).